A 183-amino-acid chain; its full sequence is Large ribosomal subunit protein uL6 (183 aa).

Belongs to the universal ribosomal protein uL6 family. As to quaternary structure, part of the 50S ribosomal subunit.

Its function is as follows. This protein binds to the 23S rRNA, and is important in its secondary structure. It is located near the subunit interface in the base of the L7/L12 stalk, and near the tRNA binding site of the peptidyltransferase center. The sequence is that of Large ribosomal subunit protein uL6 from Porphyromonas gingivalis (strain ATCC 33277 / DSM 20709 / CIP 103683 / JCM 12257 / NCTC 11834 / 2561).